The primary structure comprises 115 residues: NADH-ubiquinone oxidoreductase chain 3 (115 aa).

3 helical membrane-spanning segments follow: residues 4–24, 55–75, and 84–104; these read ALTL…AFWL, FFLV…LLPL, and LTTM…SLAY.

The protein belongs to the complex I subunit 3 family. As to quaternary structure, core subunit of respiratory chain NADH dehydrogenase (Complex I) which is composed of 45 different subunits. Interacts with TMEM186. Interacts with TMEM242.

Its subcellular location is the mitochondrion inner membrane. It catalyses the reaction a ubiquinone + NADH + 5 H(+)(in) = a ubiquinol + NAD(+) + 4 H(+)(out). Its function is as follows. Core subunit of the mitochondrial membrane respiratory chain NADH dehydrogenase (Complex I) which catalyzes electron transfer from NADH through the respiratory chain, using ubiquinone as an electron acceptor. Essential for the catalytic activity of complex I. This Halichoerus grypus (Gray seal) protein is NADH-ubiquinone oxidoreductase chain 3.